We begin with the raw amino-acid sequence, 339 residues long: Deoxyguanosinetriphosphate triphosphohydrolase-like protein (339 aa).

The region spanning 75–186 is the HD domain; that stretch reads RLTHTLEVAQ…VQISDKIAYI (112 aa).

The protein belongs to the dGTPase family. Type 2 subfamily.

The polypeptide is Deoxyguanosinetriphosphate triphosphohydrolase-like protein (Caldanaerobacter subterraneus subsp. tengcongensis (strain DSM 15242 / JCM 11007 / NBRC 100824 / MB4) (Thermoanaerobacter tengcongensis)).